We begin with the raw amino-acid sequence, 920 residues long: Nitrate reductase [NADH] (920 aa).

The interval 1–69 (MAASVENRQF…DTSDDEEDEA (69 aa)) is disordered. Acidic residues predominate over residues 60–69 (DTSDDEEDEA). Cys-185 serves as a coordination point for Mo-molybdopterin. One can recognise a Cytochrome b5 heme-binding domain in the interval 534–609 (SLTFTMSEVK…LEEYRVGELI (76 aa)). Residues His-569 and His-592 each contribute to the heme site. Residues 663–775 (REKIPCKLIS…KGPLGHIEYM (113 aa)) form the FAD-binding FR-type domain. FAD is bound by residues 715 to 718 (RAYT), 732 to 736 (LVKIY), Phe-737, Phe-744, 749 to 751 (LMS), and Thr-802.

The protein belongs to the nitrate reductase family. Homodimer. It depends on FAD as a cofactor. The cofactor is heme. Requires Mo-molybdopterin as cofactor. In terms of tissue distribution, in cortical cells of roots grown at low nitrate concentrations, in vascular tissues of roots at high nitrate concentrations and in root apex under both conditions.

The enzyme catalyses nitrite + NAD(+) + H2O = nitrate + NADH + H(+). Nitrate reductase is a key enzyme involved in the first step of nitrate assimilation in plants, fungi and bacteria. The polypeptide is Nitrate reductase [NADH] (NIA) (Cichorium intybus (Chicory)).